The sequence spans 159 residues: Aspartate carbamoyltransferase regulatory chain (159 aa).

Zn(2+) contacts are provided by Cys108, Cys113, Cys138, and Cys141.

It belongs to the PyrI family. In terms of assembly, contains catalytic and regulatory chains. Requires Zn(2+) as cofactor.

Its function is as follows. Involved in allosteric regulation of aspartate carbamoyltransferase. The protein is Aspartate carbamoyltransferase regulatory chain of Thermofilum pendens (strain DSM 2475 / Hrk 5).